A 461-amino-acid polypeptide reads, in one-letter code: Serine/threonine-protein kinase ppk24, mitochondrial (461 aa).

Residues 120–416 (FQHLKSIAKG…LDSILGTAWV (297 aa)) enclose the Protein kinase domain. ATP is bound by residues 126–134 (IAKGATSTI) and Lys153. Catalysis depends on Asp256, which acts as the Proton acceptor.

The protein belongs to the protein kinase superfamily. Ser/Thr protein kinase family.

Its subcellular location is the mitochondrion. The enzyme catalyses L-seryl-[protein] + ATP = O-phospho-L-seryl-[protein] + ADP + H(+). It carries out the reaction L-threonyl-[protein] + ATP = O-phospho-L-threonyl-[protein] + ADP + H(+). Has a role late in meiosis. The polypeptide is Serine/threonine-protein kinase ppk24, mitochondrial (ppk24) (Schizosaccharomyces pombe (strain 972 / ATCC 24843) (Fission yeast)).